The sequence spans 418 residues: Tektin-1 (418 aa).

3 coiled-coil regions span residues Lys-21–Leu-84, Leu-268–Gly-308, and Arg-336–Ile-383. Positions Pro-399–Cys-418 are disordered.

It belongs to the tektin family. As to quaternary structure, microtubule inner protein component of sperm flagellar doublet microtubules. Ubiquitinated, leading to its degradation. Deubiquitinated by USP16, promoting its stability. In terms of tissue distribution, expressed in trachea multiciliated cells.

It is found in the cytoplasm. Its subcellular location is the cytoskeleton. The protein resides in the cilium axoneme. The protein localises to the flagellum axoneme. Functionally, microtubule inner protein (MIP) part of the dynein-decorated doublet microtubules (DMTs) in cilia and flagellar axoneme. Forms filamentous polymers in the walls of ciliary and flagellar microtubules. In Bos taurus (Bovine), this protein is Tektin-1 (TEKT1).